Here is a 128-residue protein sequence, read N- to C-terminus: UPF0325 protein PMI2289 (128 aa).

It belongs to the UPF0325 family.

The sequence is that of UPF0325 protein PMI2289 from Proteus mirabilis (strain HI4320).